A 63-amino-acid chain; its full sequence is Large ribosomal subunit protein bL35 (63 aa).

It belongs to the bacterial ribosomal protein bL35 family.

The sequence is that of Large ribosomal subunit protein bL35 from Finegoldia magna (strain ATCC 29328 / DSM 20472 / WAL 2508) (Peptostreptococcus magnus).